The sequence spans 246 residues: Ubiquitin-conjugating enzyme E2 6 (246 aa).

The Cytoplasmic segment spans residues 1–224 (MATKQAQKRL…LEKQHNDKPN (224 aa)). One can recognise a UBC core domain in the interval 5–154 (QAQKRLTKEY…FNSTRFKLVF (150 aa)). Cys87 acts as the Glycyl thioester intermediate in catalysis. A helical transmembrane segment spans residues 225-245 (GSSSMFYIGVALFLFLVGLFM).

Belongs to the ubiquitin-conjugating enzyme family.

Its subcellular location is the endoplasmic reticulum membrane. It carries out the reaction S-ubiquitinyl-[E1 ubiquitin-activating enzyme]-L-cysteine + [E2 ubiquitin-conjugating enzyme]-L-cysteine = [E1 ubiquitin-activating enzyme]-L-cysteine + S-ubiquitinyl-[E2 ubiquitin-conjugating enzyme]-L-cysteine.. It participates in protein modification; protein ubiquitination. In terms of biological role, catalyzes the covalent attachment of ubiquitin to other proteins. Functions in degradation of misfolded or regulated proteins localized in the endoplasmic reticulum (ER) lumen or membrane via the ubiquitin-proteasome system. Cognate E2 conjugating enzyme for the DOA10 ubiquitin ligase complex, which is part of the ERAD-C pathway responsible for the rapid degradation of membrane proteins with misfolded cytoplasmic domains. The chain is Ubiquitin-conjugating enzyme E2 6 (UBC6) from Candida glabrata (strain ATCC 2001 / BCRC 20586 / JCM 3761 / NBRC 0622 / NRRL Y-65 / CBS 138) (Yeast).